A 468-amino-acid polypeptide reads, in one-letter code: Alpha-2A adrenergic receptor (468 aa).

Over Met-1–Thr-48 the chain is Extracellular. N-linked (GlcNAc...) asparagine glycosylation is found at Asn-25 and Asn-29. A helical membrane pass occupies residues Leu-49–Phe-74. Topologically, residues Thr-75–Leu-85 are cytoplasmic. A helical transmembrane segment spans residues Phe-86 to Met-111. Topologically, residues Gly-112–Cys-121 are extracellular. An intrachain disulfide couples Cys-121 to Cys-203. The chain crosses the membrane as a helical span at residues Glu-122 to Leu-144. At Asp-145 to Arg-164 the chain is on the cytoplasmic side. A helical membrane pass occupies residues Ile-165 to Glu-188. The Extracellular segment spans residues Lys-189 to Asp-207. Residues Gln-208–Val-232 traverse the membrane as a helical segment. Residues Arg-233 to Phe-392 are Cytoplasmic-facing. 2 disordered regions span residues Thr-242–Val-279 and Asn-291–Arg-381. The span at Ser-315–Pro-332 shows a compositional bias: basic and acidic residues. Ser-348 bears the Phosphoserine mark. The span at Arg-351 to Pro-366 shows a compositional bias: low complexity. Omega-N-methylarginine is present on Arg-370. The helical transmembrane segment at Val-393–Ile-417 threads the bilayer. Residues Gly-418–Lys-427 are Extracellular-facing. A helical membrane pass occupies residues Phe-428–Asn-448. Residues His-449–Val-468 are Cytoplasmic-facing. Residue Cys-460 is the site of S-palmitoyl cysteine attachment.

The protein belongs to the G-protein coupled receptor 1 family. Adrenergic receptor subfamily. ADRA2A sub-subfamily. In terms of assembly, component of the ADA2A-containing complex (ATAC), composed of KAT14, KAT2A, TADA2L, TADA3L, ZZ3, MBIP, WDR5, YEATS2, CCDC101 and DR1. As to expression, retina, brain and olfactory lobe.

It is found in the cell membrane. Its function is as follows. Alpha-2 adrenergic receptors mediate the catecholamine-induced inhibition of adenylate cyclase through the action of G proteins. Component of the ATAC complex, a complex with histone acetyltransferase activity on histones H3 and H4. This chain is Alpha-2A adrenergic receptor, found in Bos taurus (Bovine).